We begin with the raw amino-acid sequence, 180 residues long: UPF0102 protein Tery_0733 (180 aa).

It belongs to the UPF0102 family.

The chain is UPF0102 protein Tery_0733 from Trichodesmium erythraeum (strain IMS101).